The primary structure comprises 259 residues: uncharacterized protein (259 aa).

The protein belongs to the BtpA family.

This is an uncharacterized protein from Pyrococcus horikoshii (strain ATCC 700860 / DSM 12428 / JCM 9974 / NBRC 100139 / OT-3).